Reading from the N-terminus, the 125-residue chain is Histone H2A, orphon (125 aa).

The span at 1-18 (MSGRGKGGKVKAKAKSRS) shows a compositional bias: basic residues. Positions 1 to 21 (MSGRGKGGKVKAKAKSRSSRA) are disordered. An N-acetylserine modification is found at S2. Phosphoserine is present on S2. K119 participates in a covalent cross-link: Glycyl lysine isopeptide (Lys-Gly) (interchain with G-Cter in ubiquitin).

The protein belongs to the histone H2A family. In terms of assembly, the nucleosome is a histone octamer containing two molecules each of H2A, H2B, H3 and H4 assembled in one H3-H4 heterotetramer and two H2A-H2B heterodimers. The octamer wraps approximately 147 bp of DNA. Post-translationally, monoubiquitination of Lys-119 gives a specific tag for epigenetic transcriptional repression. Phosphorylation on Ser-2 is enhanced during mitosis. Phosphorylation on Ser-2 directly represses transcription.

The protein resides in the nucleus. The protein localises to the chromosome. In terms of biological role, core component of nucleosome. Nucleosomes wrap and compact DNA into chromatin, limiting DNA accessibility to the cellular machineries which require DNA as a template. Histones thereby play a central role in transcription regulation, DNA repair, DNA replication and chromosomal stability. DNA accessibility is regulated via a complex set of post-translational modifications of histones, also called histone code, and nucleosome remodeling. This is Histone H2A, orphon from Chironomus thummi thummi (Midge).